Here is a 229-residue protein sequence, read N- to C-terminus: Ribosome maturation factor RimM (229 aa).

The disordered stretch occupies residues 1 to 21 (MAGHDSGNAKRGRSPSFGVFV). A PRC barrel domain is found at 148–229 (ADEFYWVDLI…RVVVDWEADY (82 aa)).

The protein belongs to the RimM family. As to quaternary structure, binds ribosomal protein uS19.

The protein resides in the cytoplasm. Its function is as follows. An accessory protein needed during the final step in the assembly of 30S ribosomal subunit, possibly for assembly of the head region. Essential for efficient processing of 16S rRNA. May be needed both before and after RbfA during the maturation of 16S rRNA. It has affinity for free ribosomal 30S subunits but not for 70S ribosomes. This Burkholderia mallei (strain NCTC 10247) protein is Ribosome maturation factor RimM.